The sequence spans 287 residues: Inorganic pyrophosphatase (287 aa).

R79 is a binding site for diphosphate. 3 residues coordinate Mg(2+): D116, D121, and D153.

Belongs to the PPase family. Homodimer. Mg(2+) serves as cofactor.

It localises to the cytoplasm. It carries out the reaction diphosphate + H2O = 2 phosphate + H(+). The chain is Inorganic pyrophosphatase (IPP1) from Kluyveromyces lactis (strain ATCC 8585 / CBS 2359 / DSM 70799 / NBRC 1267 / NRRL Y-1140 / WM37) (Yeast).